A 241-amino-acid polypeptide reads, in one-letter code: Xyloglucan-specific endo-beta-1,4-glucanase A (241 aa).

The N-terminal stretch at 1-16 (MKVLALSALLSLASAA) is a signal peptide. N-linked (GlcNAc...) asparagine glycosylation occurs at Asn47.

The protein belongs to the glycosyl hydrolase 12 (cellulase H) family.

The protein resides in the secreted. It carries out the reaction xyloglucan + H2O = xyloglucan oligosaccharides.. Its function is as follows. Catalyzes endohydrolysis of 1,4-beta-D-glucosidic linkages in xyloglucan with retention of the beta-configuration of the glycosyl residues. Specific for xyloglucan and does not hydrolyze other cell wall components. This chain is Xyloglucan-specific endo-beta-1,4-glucanase A (xgeA), found in Aspergillus niger.